Here is a 384-residue protein sequence, read N- to C-terminus: Ubiquitin-like modifier-activating enzyme 5 (384 aa).

The ATP site is built by G63, D84, K107, N130, and N164. Residues C206 and C209 each coordinate Zn(2+). C230 acts as the Glycyl thioester intermediate in catalysis. C283 and C288 together coordinate Zn(2+). The tract at residues 352-375 is disordered; sequence EAPEKSSAEATQAATAPVDDTSLE.

The protein belongs to the ubiquitin-activating E1 family. UBA5 subfamily.

Functionally, E1-like enzyme which activates UFM1. This Drosophila persimilis (Fruit fly) protein is Ubiquitin-like modifier-activating enzyme 5.